The chain runs to 187 residues: Elongation factor P (187 aa).

The protein belongs to the elongation factor P family.

The protein localises to the cytoplasm. It functions in the pathway protein biosynthesis; polypeptide chain elongation. In terms of biological role, involved in peptide bond synthesis. Stimulates efficient translation and peptide-bond synthesis on native or reconstituted 70S ribosomes in vitro. Probably functions indirectly by altering the affinity of the ribosome for aminoacyl-tRNA, thus increasing their reactivity as acceptors for peptidyl transferase. In Mycobacteroides abscessus (strain ATCC 19977 / DSM 44196 / CCUG 20993 / CIP 104536 / JCM 13569 / NCTC 13031 / TMC 1543 / L948) (Mycobacterium abscessus), this protein is Elongation factor P.